Here is a 333-residue protein sequence, read N- to C-terminus: Quinolinate synthase (333 aa).

2 residues coordinate iminosuccinate: His41 and Ser58. Residue Cys103 participates in [4Fe-4S] cluster binding. Iminosuccinate is bound by residues 129-131 (YIN) and Ser146. Cys189 lines the [4Fe-4S] cluster pocket. Iminosuccinate is bound by residues 215–217 (HPE) and Thr232. A [4Fe-4S] cluster-binding site is contributed by Cys282.

It belongs to the quinolinate synthase family. Type 2 subfamily. [4Fe-4S] cluster is required as a cofactor.

It is found in the cytoplasm. The catalysed reaction is iminosuccinate + dihydroxyacetone phosphate = quinolinate + phosphate + 2 H2O + H(+). The protein operates within cofactor biosynthesis; NAD(+) biosynthesis; quinolinate from iminoaspartate: step 1/1. Its function is as follows. Catalyzes the condensation of iminoaspartate with dihydroxyacetone phosphate to form quinolinate. The protein is Quinolinate synthase of Prochlorococcus marinus (strain MIT 9313).